A 432-amino-acid chain; its full sequence is Adenylosuccinate synthetase (432 aa).

Residues 13–19 (GDEGKGK) and 41–43 (GHT) each bind GTP. The active-site Proton acceptor is Asp-14. Residues Asp-14 and Gly-41 each contribute to the Mg(2+) site. Residues 14–17 (DEGK), 39–42 (NAGH), Thr-130, Arg-144, Gln-225, Thr-240, and Arg-304 each bind IMP. The active-site Proton donor is the His-42. 300-306 (AVTGRPR) serves as a coordination point for substrate. GTP contacts are provided by residues Arg-306, 332–334 (KLD), and 415–417 (STG).

The protein belongs to the adenylosuccinate synthetase family. Homodimer. The cofactor is Mg(2+).

The protein resides in the cytoplasm. It catalyses the reaction IMP + L-aspartate + GTP = N(6)-(1,2-dicarboxyethyl)-AMP + GDP + phosphate + 2 H(+). It participates in purine metabolism; AMP biosynthesis via de novo pathway; AMP from IMP: step 1/2. Plays an important role in the de novo pathway of purine nucleotide biosynthesis. Catalyzes the first committed step in the biosynthesis of AMP from IMP. The protein is Adenylosuccinate synthetase of Histophilus somni (strain 129Pt) (Haemophilus somnus).